Consider the following 392-residue polypeptide: GTPase Obg (392 aa).

One can recognise an Obg domain in the interval 1–159 (MKFVDEATIL…RDLQLELMLL (159 aa)). The segment at 127–146 (NTRFKSSVNRTPRQKTMGTP) is disordered. Residues 129 to 143 (RFKSSVNRTPRQKTM) show a composition bias toward polar residues. One can recognise an OBG-type G domain in the interval 160-333 (ADVGMLGLPN…LCWDVMAFIK (174 aa)). GTP contacts are provided by residues 166–173 (GLPNAGKS), 191–195 (FTTLV), 213–216 (DIPG), 283–286 (NKVD), and 314–316 (SAA). Residues S173 and T193 each coordinate Mg(2+). The tract at residues 360 to 392 (QLEEAQPEVEEDDDWDDDWDEDDEEGVETIYQR) is disordered. A compositionally biased stretch (acidic residues) spans 364–386 (AQPEVEEDDDWDDDWDEDDEEGV).

It belongs to the TRAFAC class OBG-HflX-like GTPase superfamily. OBG GTPase family. Monomer. Mg(2+) is required as a cofactor.

Its subcellular location is the cytoplasm. Its function is as follows. An essential GTPase which binds GTP, GDP and possibly (p)ppGpp with moderate affinity, with high nucleotide exchange rates and a fairly low GTP hydrolysis rate. Plays a role in control of the cell cycle, stress response, ribosome biogenesis and in those bacteria that undergo differentiation, in morphogenesis control. The protein is GTPase Obg of Erwinia tasmaniensis (strain DSM 17950 / CFBP 7177 / CIP 109463 / NCPPB 4357 / Et1/99).